A 202-amino-acid chain; its full sequence is Small ribosomal subunit protein uS4 (202 aa).

Residues 1-13 (MSRYRGPRLRVTR) are compositionally biased toward basic residues. The disordered stretch occupies residues 1–42 (MSRYRGPRLRVTRRLGELPGLTRKASKKSNPPGQHGQARRKR). Residues 90 to 152 (NRLDNVCFRL…KASKKLVEGN (63 aa)) enclose the S4 RNA-binding domain.

This sequence belongs to the universal ribosomal protein uS4 family. In terms of assembly, part of the 30S ribosomal subunit. Contacts protein S5. The interaction surface between S4 and S5 is involved in control of translational fidelity.

In terms of biological role, one of the primary rRNA binding proteins, it binds directly to 16S rRNA where it nucleates assembly of the body of the 30S subunit. With S5 and S12 plays an important role in translational accuracy. In Prochlorococcus marinus (strain MIT 9312), this protein is Small ribosomal subunit protein uS4.